Reading from the N-terminus, the 443-residue chain is Threonine/serine transporter TdcC (443 aa).

11 helical membrane-spanning segments follow: residues 22–42 (TTWT…FFPI), 44–64 (AGFG…PIAF), 97–117 (GVVI…IYGV), 140–160 (FVAL…KDLM), 163–183 (VMSY…LSLI), 207–227 (ILIT…FSPI), 261–281 (MLMV…LSPA), 312–332 (AITL…KSFF), 366–386 (ISMI…PNIL), 389–409 (IEAM…MYAI), and 423–443 (DNVF…YKLF).

The protein belongs to the amino acid/polyamine transporter 2 family. SdaC/TdcC subfamily.

The protein resides in the cell inner membrane. The enzyme catalyses L-threonine(in) + H(+)(in) = L-threonine(out) + H(+)(out). The catalysed reaction is L-serine(in) + H(+)(in) = L-serine(out) + H(+)(out). Involved in the import of threonine and serine into the cell, with the concomitant import of a proton (symport system). The chain is Threonine/serine transporter TdcC from Escherichia coli O45:K1 (strain S88 / ExPEC).